The chain runs to 178 residues: Photosystem I assembly protein Ycf4 (178 aa).

A run of 2 helical transmembrane segments spans residues 19 to 39 (FLVA…SLSS) and 61 to 81 (LVMG…WYVI).

Belongs to the Ycf4 family.

The protein localises to the cellular thylakoid membrane. Functionally, seems to be required for the assembly of the photosystem I complex. The polypeptide is Photosystem I assembly protein Ycf4 (Synechococcus sp. (strain CC9902)).